Consider the following 252-residue polypeptide: tRNA (guanine-N(7)-)-methyltransferase (252 aa).

Residues Glu75, Glu100, Asp127, and Asp150 each contribute to the S-adenosyl-L-methionine site. Asp150 is a catalytic residue. Lys154 lines the substrate pocket. The interval 156-161 (RHNKRR) is interaction with RNA. Substrate-binding positions include Asp186 and 223–226 (THFE).

Belongs to the class I-like SAM-binding methyltransferase superfamily. TrmB family.

It catalyses the reaction guanosine(46) in tRNA + S-adenosyl-L-methionine = N(7)-methylguanosine(46) in tRNA + S-adenosyl-L-homocysteine. Its pathway is tRNA modification; N(7)-methylguanine-tRNA biosynthesis. Functionally, catalyzes the formation of N(7)-methylguanine at position 46 (m7G46) in tRNA. This Xanthomonas oryzae pv. oryzae (strain MAFF 311018) protein is tRNA (guanine-N(7)-)-methyltransferase.